The chain runs to 395 residues: Octopamine receptor beta-2R (395 aa).

Over 1–42 (MDPINGSHSGANATISDITNGAYNATDAGEWTSSVMFKLRTC) the chain is Extracellular. Residues Asn-5, Asn-12, and Asn-24 are each glycosylated (N-linked (GlcNAc...) asparagine). Residues 43-63 (VLLLIVIMAVLGNMLVIVSVM) form a helical membrane-spanning segment. Topologically, residues 64–74 (RHRKLRVITNY) are cytoplasmic. Residues 75–95 (FVVSLAFADILVAMVVMPFNF) traverse the membrane as a helical segment. At 96-117 (SVQFNQGWVFGETICDLWNSSD) the chain is on the extracellular side. An N-linked (GlcNAc...) asparagine glycan is attached at Asn-114. The chain crosses the membrane as a helical span at residues 118–140 (VYFTSTSILHLCCISVDRYYAIV). Over 141-154 (KPLKYPIKMTKKMA) the chain is Cytoplasmic. Residues 155-175 (FVMLAATWLSPITISYVPIFM) form a helical membrane-spanning segment. Topologically, residues 176–202 (GWYTTTDFLESRRDDQCEFKVNKPYAV) are extracellular. The helical transmembrane segment at 203–223 (ISSSISFWIPCTIMIFTYLAI) threads the bilayer. At 224–282 (FKEANRQEKALHARAGNAMLMHRHSREVSDKNGALHINATTPTKDRNLLKMKREHKAAR) the chain is on the cytoplasmic side. The chain crosses the membrane as a helical span at residues 283-303 (TLGIIMGAFILCWLPFFLYYV). The Extracellular portion of the chain corresponds to 304–315 (STSLCDSCNCPE). A helical transmembrane segment spans residues 316–336 (VVTVIMFWTGYFNSALNPIIY). The Cytoplasmic segment spans residues 337–395 (AYFNRDFRNAFKNTLACAFCSFCKRSASDLDAMERLDRRGSAQLRVPIPSRRASDLASL).

The protein belongs to the G-protein coupled receptor 1 family.

Its subcellular location is the cell membrane. Its function is as follows. Autoreceptor for octopamine, which is a neurotransmitter, neurohormone, and neuromodulator in invertebrates. Also acts as a receptor for tyramine, but with much less potency. The activity of this receptor is mediated by G proteins which activate adenylyl cyclase. The protein is Octopamine receptor beta-2R of Chilo suppressalis (Asiatic rice borer moth).